We begin with the raw amino-acid sequence, 345 residues long: Phosphoribosylformylglycinamidine cyclo-ligase (345 aa).

Belongs to the AIR synthase family.

The protein localises to the cytoplasm. It carries out the reaction 2-formamido-N(1)-(5-O-phospho-beta-D-ribosyl)acetamidine + ATP = 5-amino-1-(5-phospho-beta-D-ribosyl)imidazole + ADP + phosphate + H(+). It functions in the pathway purine metabolism; IMP biosynthesis via de novo pathway; 5-amino-1-(5-phospho-D-ribosyl)imidazole from N(2)-formyl-N(1)-(5-phospho-D-ribosyl)glycinamide: step 2/2. This Shewanella sediminis (strain HAW-EB3) protein is Phosphoribosylformylglycinamidine cyclo-ligase.